The following is a 498-amino-acid chain: Actin-binding protein WASF2 (498 aa).

Disordered regions lie at residues 173 to 203 and 240 to 435; these read KEKRKHRKEKKDNPNRGNVNPRKIKTRKEEW and NVDA…AVSD. Positions 252–263 are enriched in low complexity; that stretch reads SDSASSPSPSFS. The segment covering 298-407 has biased composition (pro residues); that stretch reads SHPPPAPPLG…PPPGPPPPPF (110 aa). Positions 436–453 constitute a WH2 domain; that stretch reads ARSDLLSAIRQGFQLRRV. Position 474 is a phosphoserine (Ser-474).

It belongs to the SCAR/WAVE family. Binds actin and the Arp2/3 complex. Interacts with BAIAP2. Component of the WAVE2 complex composed of ABI1, CYFIP1/SRA1, NCKAP1/NAP1 (NCKAP1l/HEM1 in hematopoietic cells) and WASF2/WAVE2. Directly interacts with BRK1. Interacts with FNBP1L (via the SH3 domain). As to quaternary structure, (Microbial infection) Interacts with human cytomegalovirus protein UL135. Expressed in all tissues with strongest expression in placenta, lung, and peripheral blood leukocytes, but not in skeletal muscle.

The protein localises to the cytoplasm. It localises to the cytoskeleton. Its subcellular location is the cell projection. The protein resides in the lamellipodium. It is found in the basolateral cell membrane. Functionally, downstream effector molecule involved in the transmission of signals from tyrosine kinase receptors and small GTPases to the actin cytoskeleton. Promotes formation of actin filaments. Part of the WAVE complex that regulates lamellipodia formation. The WAVE complex regulates actin filament reorganization via its interaction with the Arp2/3 complex. This is Actin-binding protein WASF2 from Homo sapiens (Human).